The chain runs to 491 residues: NADH-ubiquinone oxidoreductase chain 4 (491 aa).

Helical transmembrane passes span 2 to 22 (IFHK…IINV), 37 to 57 (ALEW…AFDM), 89 to 109 (ISLF…LISW), 114 to 134 (FLLK…MGVF), 139 to 159 (LLLF…LIGV), 169 to 189 (ASYY…LGIF), 215 to 235 (WIFA…PFHI), 245 to 265 (PVSG…YGFL), 271 to 291 (ILPA…VIAI), 308 to 328 (IAYS…THTI), 332 to 352 (VAAV…FIAV), 372 to 392 (FSMP…MAIP), 412 to 432 (IVIG…SLYL), and 457 to 477 (IAIS…SLII).

It belongs to the complex I subunit 4 family.

Its subcellular location is the mitochondrion membrane. It carries out the reaction a ubiquinone + NADH + 5 H(+)(in) = a ubiquinol + NAD(+) + 4 H(+)(out). Core subunit of the mitochondrial membrane respiratory chain NADH dehydrogenase (Complex I) that is believed to belong to the minimal assembly required for catalysis. Complex I functions in the transfer of electrons from NADH to the respiratory chain. The immediate electron acceptor for the enzyme is believed to be ubiquinone. The protein is NADH-ubiquinone oxidoreductase chain 4 (ND4) of Metridium senile (Brown sea anemone).